A 310-amino-acid chain; its full sequence is Membrane protein insertase YidC 2 (310 aa).

The first 23 residues, Met-1 to Gly-23, serve as a signal peptide directing secretion. Cys-24 carries N-palmitoyl cysteine lipidation. Cys-24 carries S-diacylglycerol cysteine lipidation. A run of 5 helical transmembrane segments spans residues Gly-34–Ala-54, Leu-57–Leu-77, Phe-136–Ile-156, Ile-180–Val-200, and Val-220–Phe-240. The tract at residues Glu-263–Gln-310 is disordered. The span at Ala-276–Leu-290 shows a compositional bias: basic and acidic residues. The segment covering Ile-291–Gln-310 has biased composition (basic residues).

Belongs to the OXA1/ALB3/YidC family. Type 2 subfamily.

It localises to the cell membrane. In terms of biological role, required for the insertion and/or proper folding and/or complex formation of integral membrane proteins into the membrane. Involved in integration of membrane proteins that insert both dependently and independently of the Sec translocase complex, as well as at least some lipoproteins. Partially complements an E.coli yidC depletion experiment. This Streptococcus mutans serotype c (strain ATCC 700610 / UA159) protein is Membrane protein insertase YidC 2 (yidC2).